A 354-amino-acid chain; its full sequence is Probable L-ascorbate-6-phosphate lactonase UlaG (354 aa).

This sequence belongs to the UlaG family. The cofactor is a divalent metal cation.

It localises to the cytoplasm. The enzyme catalyses L-ascorbate 6-phosphate + H2O = 3-dehydro-L-gulonate 6-phosphate. Its pathway is cofactor degradation; L-ascorbate degradation; D-xylulose 5-phosphate from L-ascorbate: step 1/4. Its function is as follows. Probably catalyzes the hydrolysis of L-ascorbate-6-P into 3-keto-L-gulonate-6-P. Is essential for L-ascorbate utilization under anaerobic conditions. In Salmonella choleraesuis (strain SC-B67), this protein is Probable L-ascorbate-6-phosphate lactonase UlaG.